Here is a 1482-residue protein sequence, read N- to C-terminus: Cystic fibrosis transmembrane conductance regulator (1482 aa).

The Cytoplasmic segment spans residues 1-77 (MQKSPLERAS…KLINALRRCF (77 aa)). A helical membrane pass occupies residues 78 to 98 (FWRFVFYGILLYLGEVTKAVQ). An ABC transmembrane type-1 1 domain is found at 81–365 (FVFYGILLYL…WAVQTWYDSL (285 aa)). Over 99–122 (PLLLGRIIASYDPDNKVERSIAIY) the chain is Extracellular. Residues 123 to 146 (LAIGLCLLFIVRTLLLHPAIFGLH) traverse the membrane as a helical segment. Residues 147–195 (HMGMQMRIAMFSLIYKKTLKLSSRVLDKISIGQLVSLLSNNLNKFDEGL) are Cytoplasmic-facing. The helical transmembrane segment at 196-216 (ALAHFVWIAPLQVTLLMGLIW) threads the bilayer. At 217–222 (DLLQAS) the chain is on the extracellular side. Residues 223 to 243 (AFCGLAFLIIVALGQAGLGRM) form a helical membrane-spanning segment. The Cytoplasmic segment spans residues 244-298 (MMKYRDKRAGKINERLVITSEMIENIQSVKAYCWEEAMEKMIENLRQIELRLTRK). A helical membrane pass occupies residues 299-319 (AAYVRYFNSAAFFFSGFFVVF). The Extracellular portion of the chain corresponds to 320-339 (LSVLPYAMLKGIILRKIFTT). A helical transmembrane segment spans residues 340 to 358 (ISFCIVLRMAVTRQFPWAV). Residues 359 to 858 (QTWYDSLGAI…YLRYVTVHKS (500 aa)) are Cytoplasmic-facing. Residues Trp401, Ser434, 458–465 (GSTGAGKT), and Gln493 contribute to the ATP site. One can recognise an ABC transporter 1 domain in the interval 423 to 646 (NGDNSLFFSN…RPDFSSELMG (224 aa)). The S-palmitoyl cysteine moiety is linked to residue Cys524. Residues Ser549 and Ser660 each carry the phosphoserine modification. Residues 654–831 (SAERRNSILT…EEINEEDLKE (178 aa)) are disordered R region. Residue Ser670 is modified to Phosphoserine; by PKA. Phosphoserine is present on Ser685. Lys687 is covalently cross-linked (Glycyl lysine isopeptide (Lys-Gly) (interchain with G-Cter in ubiquitin)). Phosphoserine is present on residues Ser699 and Ser711. Thr716 is subject to Phosphothreonine. A phosphoserine mark is found at Ser736, Ser767, Ser790, Ser795, and Ser813. The helical transmembrane segment at 859–879 (LIFVLIWCLVVFLAEVAVSLV) threads the bilayer. An ABC transmembrane type-1 2 domain is found at 859-1156 (LIFVLIWCLV…AVNSSIDVDS (298 aa)). Residues 880 to 919 (VLYLLRTSSLQDKGNNTTVNANSSYGVIVTNTSSYYLLYI) lie on the Extracellular side of the membrane. N-linked (GlcNAc...) asparagine glycosylation is found at Asn894, Asn895, Asn901, and Asn910. Residues 920-940 (YVGIADSLFALAIFRGLPLVH) traverse the membrane as a discontinuously helical segment. Residues 941-991 (TLIKVSKTLHHKMLRSILQAPMSTFNTLKAGRILNRFSKDIAILDDLLPLT) are Cytoplasmic-facing. Residues 992–1012 (MFDFIQLLLIVIGAVVVVSVL) traverse the membrane as a helical segment. The Extracellular segment spans residues 1013–1014 (QP). The helical transmembrane segment at 1015-1035 (YIFLATVPVIAAFIILRAYFL) threads the bilayer. The Cytoplasmic segment spans residues 1036-1096 (HTSQQLKQLE…TANWFLYLST (61 aa)). A helical transmembrane segment spans residues 1097 to 1117 (LRWFQMRIEIIFVIFFIAVTF). At 1118–1131 (VSILTTGEGEGTIG) the chain is on the extracellular side. A helical transmembrane segment spans residues 1132 to 1152 (IILTLAMNIMNTLQWAVNSSI). The Cytoplasmic segment spans residues 1153–1482 (DVDSLMRSVS…TEEEVQETRL (330 aa)). Residues 1212 to 1445 (MTVKDLTAKY…KSLFRQAISP (234 aa)) enclose the ABC transporter 2 domain. Residues Tyr1221 and 1246-1253 (GRTGSGKS) each bind ATP. The tract at residues 1388–1482 (RTLKQAFADC…TEEEVQETRL (95 aa)) is interaction with GORASP2. Cys1397 carries the S-palmitoyl cysteine lipid modification. Over residues 1454–1463 (HRNSSRHRSR) the composition is skewed to basic residues. The tract at residues 1454–1482 (HRNSSRHRSRSQIAALKEETEEEVQETRL) is disordered. Position 1458 is a phosphoserine (Ser1458). A compositionally biased stretch (acidic residues) spans 1472–1482 (ETEEEVQETRL). The PDZ-binding motif lies at 1480 to 1482 (TRL).

It belongs to the ABC transporter superfamily. ABCC family. CFTR transporter (TC 3.A.1.202) subfamily. As to quaternary structure, monomer; does not require oligomerization for channel activity. May form oligomers in the membrane. Interacts with SLC26A3, SLC26A6 and NHERF1. Interacts with SHANK2. Interacts with MYO6. Interacts (via C-terminus) with GOPC (via PDZ domain); this promotes CFTR internalization and thereby decreases channel activity. Interacts with SLC4A7 through NHERF1. Found in a complex with MYO5B and RAB11A. Interacts with ANO1. Interacts with SLC26A8. Interacts with AHCYL1; the interaction increases CFTR activity. Interacts with CSE1L. The core-glycosylated form interacts with GORASP2 (via PDZ GRASP-type 1 domain) in respone to ER stress. Interacts with MARCHF2; the interaction leads to CFTR ubiqtuitination and degradation. Interacts with ADGRG2. Post-translationally, N-glycosylated. Phosphorylated; cAMP treatment promotes phosphorylation and activates the channel. Dephosphorylation decreases the ATPase activity (in vitro). Phosphorylation at PKA sites activates the channel. Phosphorylation at PKC sites enhances the response to phosphorylation by PKA. Phosphorylated by AMPK; this inhibits channel activity. In terms of processing, ubiquitinated, leading to its degradation in the lysosome. Deubiquitination by USP10 in early endosomes enhances its endocytic recycling to the cell membrane. Ubiquitinated by RNF185 during ER stress. Ubiquitinated by MARCHF2.

The protein localises to the apical cell membrane. It is found in the early endosome membrane. The protein resides in the cell membrane. Its subcellular location is the recycling endosome membrane. It localises to the endoplasmic reticulum membrane. The protein localises to the nucleus. The enzyme catalyses ATP + H2O + closed Cl(-) channel = ADP + phosphate + open Cl(-) channel.. It catalyses the reaction chloride(in) = chloride(out). The catalysed reaction is hydrogencarbonate(in) = hydrogencarbonate(out). It carries out the reaction ATP + H2O = ADP + phosphate + H(+). Epithelial ion channel that plays an important role in the regulation of epithelial ion and water transport and fluid homeostasis. Mediates the transport of chloride ions across the cell membrane. Possesses an intrinsic ATPase activity and utilizes ATP to gate its channel; the passive flow of anions through the channel is gated by cycles of ATP binding and hydrolysis by the ATP-binding domains. The ion channel is also permeable to HCO(3)(-); selectivity depends on the extracellular chloride concentration. Exerts its function also by modulating the activity of other ion channels and transporters. Contributes to the regulation of the pH and the ion content of the epithelial fluid layer. Modulates the activity of the epithelial sodium channel (ENaC) complex, in part by regulating the cell surface expression of the ENaC complex. May regulate bicarbonate secretion and salvage in epithelial cells by regulating the transporter SLC4A7. Can inhibit the chloride channel activity of ANO1. Plays a role in the chloride and bicarbonate homeostasis during sperm epididymal maturation and capacitation. This is Cystic fibrosis transmembrane conductance regulator from Loxodonta africana (African elephant).